Here is a 165-residue protein sequence, read N- to C-terminus: Large ribosomal subunit protein uL11 (165 aa).

The protein belongs to the universal ribosomal protein uL11 family. In terms of assembly, component of the large ribosomal subunit. Mature ribosomes consist of a small (40S) and a large (60S) subunit. The 40S subunit contains about 32 different proteins and 1 molecule of RNA (18S). The 60S subunit contains 45 different proteins and 3 molecules of RNA (25S, 5.8S and 5S).

It localises to the cytoplasm. Component of the ribosome, a large ribonucleoprotein complex responsible for the synthesis of proteins in the cell. The small ribosomal subunit (SSU) binds messenger RNAs (mRNAs) and translates the encoded message by selecting cognate aminoacyl-transfer RNA (tRNA) molecules. The large subunit (LSU) contains the ribosomal catalytic site termed the peptidyl transferase center (PTC), which catalyzes the formation of peptide bonds, thereby polymerizing the amino acids delivered by tRNAs into a polypeptide chain. The nascent polypeptides leave the ribosome through a tunnel in the LSU and interact with protein factors that function in enzymatic processing, targeting, and the membrane insertion of nascent chains at the exit of the ribosomal tunnel. In Candida albicans (strain SC5314 / ATCC MYA-2876) (Yeast), this protein is Large ribosomal subunit protein uL11 (RPL12).